Reading from the N-terminus, the 201-residue chain is MDSTGEFCWICHQPEGPLKRFCGCKGSCAVSHQDCLRGWLETSRRQTCALCGTPYSMKWKTKPLREWTWGEEEVLAAMEACLPLVLIPLAVLMIVMGTWLLVNHNGFLSPRMQVVLVVIVLLAMIVFSASASYVMVEGPGCLDTCTAKNSTVTVNSIDEAIATQQPTKTDLGLARETLSTRFRRGKCRSCCRLGCVRLCCV.

An RING-CH-type zinc finger spans residues 1–58 (MDSTGEFCWICHQPEGPLKRFCGCKGSCAVSHQDCLRGWLETSRRQTCALCGTPYSMK). Residues 1–81 (MDSTGEFCWI…EEVLAAMEAC (81 aa)) are Cytoplasmic-facing. The Zn(2+) site is built by C8, C11, C22, C24, H32, C35, C48, and C51. The interval 52–79 (GTPYSMKWKTKPLREWTWGEEEVLAAME) is DIRT. The chain crosses the membrane as a helical span at residues 82-102 (LPLVLIPLAVLMIVMGTWLLV). Residues 103–113 (NHNGFLSPRMQ) are Extracellular-facing. The chain crosses the membrane as a helical span at residues 114-134 (VVLVVIVLLAMIVFSASASYV). The Cytoplasmic portion of the chain corresponds to 135–201 (MVEGPGCLDT…RLGCVRLCCV (67 aa)).

In terms of assembly, interacts with host UBE2J2.

The protein localises to the host endoplasmic reticulum membrane. The catalysed reaction is [E2 ubiquitin-conjugating enzyme]-S-ubiquitinyl-L-cysteine + [acceptor protein]-L-cysteine = [E2 ubiquitin-conjugating enzyme]-L-cysteine + [acceptor protein]-S-ubiquitinyl-L-cysteine.. Its pathway is protein modification; protein ubiquitination. Functionally, E3 ubiquitin-protein ligase that mediates ubiquitination of host surface class I (MHC-I) H-2D(b)/H2-D1 and H-2K(b)/H2-K1 molecules before they exit the endoplasmic reticulum, leading to their degradation by the endoplasmic reticulum-associated degradation (ERAD) system, thus blocking the immune detection of virus-infected cells. Mediates ubiquitination of lysine, as well as serine and threonine residues present in the cytoplasmic tail of surface class I molecules. Promotes ubiquitination of hydroxylated serine or threonine residues via ester bonds instead of the classical isopeptide linkage. The protein is E3 ubiquitin-protein ligase MIR1 (K3) of Murid herpesvirus 4 (MuHV-4).